Consider the following 275-residue polypeptide: LIM/homeobox protein Awh (275 aa).

LIM zinc-binding domains lie at 6 to 67 and 68 to 129; these read RSCA…NFGA and KCSK…TVEG. Thr126 is subject to Phosphothreonine. The homeobox DNA-binding region spans 148-207; that stretch reads TKRVRTTFTEEQLQVLQANFQIDSNPDGQDLERIASVTGLSKRVTQVWFQNSRARQKKHI. Positions 253 to 275 are disordered; the sequence is PTHESSMDELSQDSSVHCMPSEV.

As to expression, first detected in neuroblasts in stage 9 embryos. Expressed in all 10 abdominal segments and in the labial segment during early embryogenesis. Expressed in the stage 14 developing epithelium. By embryonic stage 16, expression is refined to the abdominal histoblasts and salivary gland imaginal ring cells. Expressed in both larval and imaginal cells between the salivary gland and the salivary gland imaginal ring, in late third instar larvae. Also expressed in specific areas of the larval wing, leg and eye-antennal disks.

It is found in the nucleus. Functionally, probable transcription factor. Required for the establishment of a subset of imaginal tissues: the abdominal histoblasts and the salivary gland imaginal rings. The chain is LIM/homeobox protein Awh from Drosophila melanogaster (Fruit fly).